We begin with the raw amino-acid sequence, 261 residues long: Protein unc-50 homolog (261 aa).

6 helical membrane passes run 37–57 (IFHY…YLCF), 82–102 (AFAV…AITF), 113–133 (VMFW…ATIG), 166–186 (SFFP…PILL), 190–210 (LFAA…YYYV), and 225–245 (VVFL…VVMG).

The protein belongs to the unc-50 family.

It is found in the membrane. This is Protein unc-50 homolog from Dictyostelium discoideum (Social amoeba).